The chain runs to 744 residues: Adenosylcobalamin-dependent ribonucleoside-triphosphate reductase (744 aa).

Cys-120 and Cys-424 are oxidised to a cystine. Residues 148–159 (SMPFSFLFDQLM) are effector region-1. Residues 169-318 (VDENINQIPK…ICNLIGKTVV (150 aa)) form an effector region-2 region. Catalysis depends on residues Cys-413 and Glu-415. The segment at 570-631 (FHYSGYLIQR…SDNFASAGTV (62 aa)) is adenosylcobalamin-binding-1. Residues 690 to 729 (LKQAPKEPISKEKYEKADNHITGNVEIVFEQTNEDQKGLE) are adenosylcobalamin-binding-2.

The protein belongs to the class II ribonucleoside-triphosphate reductase family. As to quaternary structure, monomer. The cofactor is adenosylcob(III)alamin.

The catalysed reaction is a 2'-deoxyribonucleoside 5'-triphosphate + [thioredoxin]-disulfide + H2O = a ribonucleoside 5'-triphosphate + [thioredoxin]-dithiol. Its activity is regulated as follows. Allosterically regulated by ATP and dNTP. This chain is Adenosylcobalamin-dependent ribonucleoside-triphosphate reductase (rtpR), found in Lactobacillus gasseri (strain ATCC 33323 / DSM 20243 / BCRC 14619 / CIP 102991 / JCM 1131 / KCTC 3163 / NCIMB 11718 / NCTC 13722 / AM63).